A 517-amino-acid chain; its full sequence is Crotonobetaine/carnitine--CoA ligase (517 aa).

It belongs to the ATP-dependent AMP-binding enzyme family.

The enzyme catalyses 4-(trimethylamino)butanoate + ATP + CoA = 4-(trimethylamino)butanoyl-CoA + AMP + diphosphate. It carries out the reaction crotonobetaine + ATP + CoA = crotonobetainyl-CoA + AMP + diphosphate. The catalysed reaction is (R)-carnitine + ATP + CoA = (R)-carnitinyl-CoA + AMP + diphosphate. It functions in the pathway amine and polyamine metabolism; carnitine metabolism. Catalyzes the transfer of CoA to carnitine, generating the initial carnitinyl-CoA needed for the CaiB reaction cycle. Also has activity toward crotonobetaine and gamma-butyrobetaine. The chain is Crotonobetaine/carnitine--CoA ligase from Escherichia coli O139:H28 (strain E24377A / ETEC).